We begin with the raw amino-acid sequence, 159 residues long: Ribosomal RNA large subunit methyltransferase H (159 aa).

S-adenosyl-L-methionine is bound by residues Leu76, Gly108, and 127–132 (FSKMTF).

Belongs to the RNA methyltransferase RlmH family. As to quaternary structure, homodimer.

Its subcellular location is the cytoplasm. The catalysed reaction is pseudouridine(1915) in 23S rRNA + S-adenosyl-L-methionine = N(3)-methylpseudouridine(1915) in 23S rRNA + S-adenosyl-L-homocysteine + H(+). Specifically methylates the pseudouridine at position 1915 (m3Psi1915) in 23S rRNA. The polypeptide is Ribosomal RNA large subunit methyltransferase H (Staphylococcus saprophyticus subsp. saprophyticus (strain ATCC 15305 / DSM 20229 / NCIMB 8711 / NCTC 7292 / S-41)).